Consider the following 161-residue polypeptide: Large ribosomal subunit protein uL10 (161 aa).

The protein belongs to the universal ribosomal protein uL10 family. As to quaternary structure, part of the ribosomal stalk of the 50S ribosomal subunit. The N-terminus interacts with L11 and the large rRNA to form the base of the stalk. The C-terminus forms an elongated spine to which L12 dimers bind in a sequential fashion forming a multimeric L10(L12)X complex.

Forms part of the ribosomal stalk, playing a central role in the interaction of the ribosome with GTP-bound translation factors. The sequence is that of Large ribosomal subunit protein uL10 (rplJ) from Wigglesworthia glossinidia brevipalpis.